A 478-amino-acid chain; its full sequence is Membrane-bound lytic murein transglycosylase F (478 aa).

A signal peptide spans 1–22 (MTRFLFAIILGLLLTACQQETV). A non-LT domain region spans residues 23–257 (EETEFVPHKL…HLNEKYFGHV (235 aa)). The tract at residues 258–478 (KRFDYIDTRA…PGTLSPDKPK (221 aa)) is LT domain. The active site involves glutamate 302. Residues 447 to 478 (KQQNSEEVAPSDLTAEETPVPAPGTLSPDKPK) form a disordered region.

The protein in the N-terminal section; belongs to the bacterial solute-binding protein 3 family. This sequence in the C-terminal section; belongs to the transglycosylase Slt family.

Its subcellular location is the cell outer membrane. The catalysed reaction is Exolytic cleavage of the (1-&gt;4)-beta-glycosidic linkage between N-acetylmuramic acid (MurNAc) and N-acetylglucosamine (GlcNAc) residues in peptidoglycan, from either the reducing or the non-reducing ends of the peptidoglycan chains, with concomitant formation of a 1,6-anhydrobond in the MurNAc residue.. In terms of biological role, murein-degrading enzyme that degrades murein glycan strands and insoluble, high-molecular weight murein sacculi, with the concomitant formation of a 1,6-anhydromuramoyl product. Lytic transglycosylases (LTs) play an integral role in the metabolism of the peptidoglycan (PG) sacculus. Their lytic action creates space within the PG sacculus to allow for its expansion as well as for the insertion of various structures such as secretion systems and flagella. The sequence is that of Membrane-bound lytic murein transglycosylase F from Shewanella oneidensis (strain ATCC 700550 / JCM 31522 / CIP 106686 / LMG 19005 / NCIMB 14063 / MR-1).